A 957-amino-acid chain; its full sequence is Iron-responsive element-binding protein 2 (957 aa).

Positions 506, 572, and 575 each coordinate [4Fe-4S] cluster.

It belongs to the aconitase/IPM isomerase family. [4Fe-4S] cluster is required as a cofactor. Ubiquitinated and degraded by the proteasome in presence of high level of iron and oxygen.

It is found in the cytoplasm. Its function is as follows. RNA-binding protein that binds to iron-responsive elements (IRES), which are stem-loop structures found in the 5'-UTR of ferritin, and delta aminolevulinic acid synthase mRNAs, and in the 3'-UTR of transferrin receptor mRNA. Binding to the IRE element in ferritin results in the repression of its mRNA translation. Binding of the protein to the transferrin receptor mRNA inhibits the degradation of this otherwise rapidly degraded mRNA. This Xenopus tropicalis (Western clawed frog) protein is Iron-responsive element-binding protein 2 (ireb2).